A 375-amino-acid chain; its full sequence is F420-dependent formate dehydrogenase 2 subunit beta (375 aa).

4Fe-4S ferredoxin-type domains follow at residues 268–291 and 320–349; these read PEPE…DVCP and IRLS…AKIY. [4Fe-4S] cluster-binding residues include Cys-280, Cys-283, Cys-286, Cys-290, Cys-329, Cys-332, Cys-335, and Cys-339.

This sequence belongs to the FrhB family. Dimer of an alpha (FdhA2) and a beta (FdhB2) subunit. The cofactor is [4Fe-4S] cluster. It depends on FAD as a cofactor. Zn(2+) serves as cofactor.

The enzyme catalyses oxidized coenzyme F420-(gamma-L-Glu)(n) + formate + 2 H(+) = reduced coenzyme F420-(gamma-L-Glu)(n) + CO2. In terms of biological role, catalyzes the oxidation of formate to carbon dioxide, with coenzyme F420 as the electron acceptor. In vitro can also use methyl viologen as electron acceptor. The sequence is that of F420-dependent formate dehydrogenase 2 subunit beta from Methanococcus maripaludis (strain DSM 14266 / JCM 13030 / NBRC 101832 / S2 / LL).